Consider the following 477-residue polypeptide: Alanine--glyoxylate aminotransferase 2 homolog 2, mitochondrial (477 aa).

Residues 1 to 22 (MQRFAAKRSVQNISVSLWRRCI) constitute a mitochondrion transit peptide. Residues 165 to 166 (GT), Y192, and 292 to 295 (DEVQ) each bind pyridoxal 5'-phosphate. K321 carries the post-translational modification N6-(pyridoxal phosphate)lysine. T350 is a binding site for pyridoxal 5'-phosphate.

The protein belongs to the class-III pyridoxal-phosphate-dependent aminotransferase family. Homotetramer. Interacts with GRF3. It depends on pyridoxal 5'-phosphate as a cofactor.

The protein resides in the mitochondrion. The catalysed reaction is glyoxylate + L-alanine = glycine + pyruvate. In Arabidopsis thaliana (Mouse-ear cress), this protein is Alanine--glyoxylate aminotransferase 2 homolog 2, mitochondrial (AGT3).